A 472-amino-acid chain; its full sequence is 23S rRNA (uracil(1939)-C(5))-methyltransferase RlmD (472 aa).

A compositionally biased stretch (basic residues) spans 1 to 15 (MSRTAPHRRAPKRYK). The tract at residues 1–23 (MSRTAPHRRAPKRYKTPPPAPAH) is disordered. Positions 23–87 (HVVTGNEPVI…PKFEQAEVVQ (65 aa)) constitute a TRAM domain. 4 residues coordinate [4Fe-4S] cluster: Cys100, Cys106, Cys109, and Cys188. Gln296, Phe325, Asn330, Glu346, Asn374, and Asp395 together coordinate S-adenosyl-L-methionine. The active-site Nucleophile is Cys428.

Belongs to the class I-like SAM-binding methyltransferase superfamily. RNA M5U methyltransferase family. RlmD subfamily.

The catalysed reaction is uridine(1939) in 23S rRNA + S-adenosyl-L-methionine = 5-methyluridine(1939) in 23S rRNA + S-adenosyl-L-homocysteine + H(+). Its function is as follows. Catalyzes the formation of 5-methyl-uridine at position 1939 (m5U1939) in 23S rRNA. The chain is 23S rRNA (uracil(1939)-C(5))-methyltransferase RlmD from Paraburkholderia xenovorans (strain LB400).